The sequence spans 358 residues: Isopentenyl-diphosphate delta-isomerase (358 aa).

Residue 12-13 (RK) coordinates substrate. FMN is bound by residues 69–71 (AMT), Ser-99, and Asn-128. Residue Gln-158 participates in substrate binding. Glu-159 provides a ligand contact to Mg(2+). Residues Lys-190, Thr-220, 267–269 (GIR), and 288–289 (AG) contribute to the FMN site.

Belongs to the IPP isomerase type 2 family. Homooctamer. Dimer of tetramers. FMN serves as cofactor. Requires NADPH as cofactor. It depends on Mg(2+) as a cofactor.

The protein localises to the cytoplasm. It carries out the reaction isopentenyl diphosphate = dimethylallyl diphosphate. In terms of biological role, involved in the biosynthesis of isoprenoids. Catalyzes the 1,3-allylic rearrangement of the homoallylic substrate isopentenyl (IPP) to its allylic isomer, dimethylallyl diphosphate (DMAPP). The polypeptide is Isopentenyl-diphosphate delta-isomerase (Listeria welshimeri serovar 6b (strain ATCC 35897 / DSM 20650 / CCUG 15529 / CIP 8149 / NCTC 11857 / SLCC 5334 / V8)).